The primary structure comprises 787 residues: Phenylalanine--tRNA ligase beta subunit (787 aa).

The region spanning 38–151 is the tRNA-binding domain; sequence GQDPAPFVVA…SDYEVGDSFF (114 aa). A B5 domain is found at 397–474; it reads SEGRVISFNP…RMHGYDKVQE (78 aa). Mg(2+)-binding residues include D452, D458, E461, and E462. One can recognise an FDX-ACB domain in the interval 694–785; that stretch reads HKYQPVKRDF…VAQKLGGELR (92 aa).

Belongs to the phenylalanyl-tRNA synthetase beta subunit family. Type 1 subfamily. In terms of assembly, tetramer of two alpha and two beta subunits. Requires Mg(2+) as cofactor.

It is found in the cytoplasm. The catalysed reaction is tRNA(Phe) + L-phenylalanine + ATP = L-phenylalanyl-tRNA(Phe) + AMP + diphosphate + H(+). This chain is Phenylalanine--tRNA ligase beta subunit, found in Anaplasma marginale (strain St. Maries).